We begin with the raw amino-acid sequence, 140 residues long: RxLR effector protein Avh23 (140 aa).

The signal sequence occupies residues 1-21 (MRLTYFLTVIVVATLHAGGTA). The RxLR-dEER motif lies at 54-72 (RMLRKVKEDTVSKKDHEER). The stretch at 100-113 (QGAFQRQNAFVNRD) is one ADA2-binding IR1 repeat. The ADA2-binding IR2 repeat unit spans residues 114–127 (QGAFQRQNAFVKRA).

This sequence belongs to the RxLR effector family. Interacts with host histone acetyl transferase SAGA complex subunit ADA2.

Its subcellular location is the secreted. The protein resides in the host nucleus. The protein localises to the host cytoplasm. Functionally, effector that suppresses plant defense responses during the early stages of pathogen infection. Suppresses cell death induced by effectors and PAMPs in plant hosts. Acts as a modulator of histone acetyltransferase (HAT) in plants. Avh23 binds to the ADA2 subunit of the HAT complex SAGA and disrupts its assembly by interfering with the association of ADA2 with the catalytic subunit GCN5. As such, Avh23 suppresses H3K9 acetylation mediated by the ADA2/GCN5 module and increases plant susceptibility. This chain is RxLR effector protein Avh23, found in Phytophthora sojae (Soybean stem and root rot agent).